A 36-amino-acid polypeptide reads, in one-letter code: Pancreatic polypeptide (36 aa).

The residue at position 36 (Tyr36) is a Tyrosine amide.

This sequence belongs to the NPY family.

It localises to the secreted. Hormone secreted by pancreatic cells that acts as a regulator of pancreatic and gastrointestinal functions probably by signaling through the G protein-coupled receptor NPY4R2. In Chinchilla chinchilla (Short-tailed chinchilla), this protein is Pancreatic polypeptide (PPY).